The following is a 755-amino-acid chain: Photosystem I P700 chlorophyll a apoprotein A1 (755 aa).

Helical transmembrane passes span 72 to 95, 158 to 181, 197 to 221, 297 to 315, 352 to 375, 391 to 417, 439 to 461, and 536 to 554; these read IFSA…YHGA, LLCT…FHYH, LNHH…HVAI, QAHH…GHMY, WHAQ…QHMY, ISLF…IYMV, AIIS…FYVH, and FMVH…LILL. 2 residues coordinate [4Fe-4S] cluster: cysteine 578 and cysteine 587. Transmembrane regions (helical) follow at residues 594 to 615 and 669 to 691; these read HVFL…HFSW and LSAY…MFLF. Residue histidine 680 coordinates chlorophyll a'. Chlorophyll a contacts are provided by methionine 688 and tyrosine 696. Tryptophan 697 is a binding site for phylloquinone. The chain crosses the membrane as a helical span at residues 729–749; the sequence is AVGVAHYLLGGIVTTWAFFLA.

The protein belongs to the PsaA/PsaB family. In terms of assembly, the PsaA/B heterodimer binds the P700 chlorophyll special pair and subsequent electron acceptors. PSI consists of a core antenna complex that captures photons, and an electron transfer chain that converts photonic excitation into a charge separation. The cyanobacterial PSI reaction center is composed of one copy each of PsaA,B,C,D,E,F,I,J,K,L,M and X, and forms trimeric complexes. PSI electron transfer chain: 5 chlorophyll a, 1 chlorophyll a', 2 phylloquinones and 3 4Fe-4S clusters. PSI core antenna: 90 chlorophyll a, 22 carotenoids, 3 phospholipids and 1 galactolipid. P700 is a chlorophyll a/chlorophyll a' dimer, A0 is one or more chlorophyll a, A1 is one or both phylloquinones and FX is a shared 4Fe-4S iron-sulfur center. serves as cofactor.

It is found in the cellular thylakoid membrane. It catalyses the reaction reduced [plastocyanin] + hnu + oxidized [2Fe-2S]-[ferredoxin] = oxidized [plastocyanin] + reduced [2Fe-2S]-[ferredoxin]. PsaA and PsaB bind P700, the primary electron donor of photosystem I (PSI), as well as the electron acceptors A0, A1 and FX. PSI is a plastocyanin/cytochrome c6-ferredoxin oxidoreductase, converting photonic excitation into a charge separation, which transfers an electron from the donor P700 chlorophyll pair to the spectroscopically characterized acceptors A0, A1, FX, FA and FB in turn. Oxidized P700 is reduced on the lumenal side of the thylakoid membrane by plastocyanin or cytochrome c6. This Synechococcus sp. (strain JA-2-3B'a(2-13)) (Cyanobacteria bacterium Yellowstone B-Prime) protein is Photosystem I P700 chlorophyll a apoprotein A1.